Reading from the N-terminus, the 455-residue chain is Yop proteins translocation protein P (455 aa).

2 disordered regions span residues 38-82 (NKGN…QPGR) and 430-455 (DFQA…EAEE). Composition is skewed to basic and acidic residues over residues 43–69 (HPKE…DGLR) and 439–449 (QESRQKRHVYE).

Belongs to the SpaN family.

Its subcellular location is the cytoplasm. Its function is as follows. Component of the yop secretion machinery. This is Yop proteins translocation protein P (yscP) from Yersinia pseudotuberculosis serotype I (strain IP32953).